We begin with the raw amino-acid sequence, 363 residues long: Protein RecA (363 aa).

ATP is bound at residue 77–84 (GPESSGKT).

The protein belongs to the RecA family.

The protein localises to the cytoplasm. Functionally, can catalyze the hydrolysis of ATP in the presence of single-stranded DNA, the ATP-dependent uptake of single-stranded DNA by duplex DNA, and the ATP-dependent hybridization of homologous single-stranded DNAs. It interacts with LexA causing its activation and leading to its autocatalytic cleavage. The protein is Protein RecA of Agrobacterium fabrum (strain C58 / ATCC 33970) (Agrobacterium tumefaciens (strain C58)).